Reading from the N-terminus, the 805-residue chain is Acetyl-CoA decarbonylase/synthase complex subunit alpha 2 (805 aa).

Positions 72, 75, 76, 78, 83, and 93 each coordinate [4Fe-4S] cluster. His116 provides a ligand contact to CO. Residues His249, Cys277, and Cys322 each contribute to the [Ni-4Fe-4S] cluster site. 2 4Fe-4S ferredoxin-type domains span residues 407 to 435 (EEFK…IPEA) and 445 to 474 (EYLE…LNVL). Residues Cys416, Cys419, Cys422, Cys426, Cys454, Cys457, Cys460, and Cys464 each coordinate [4Fe-4S] cluster. Residues Cys522, Cys551, and Cys586 each coordinate [Ni-4Fe-4S] cluster.

The protein belongs to the Ni-containing carbon monoxide dehydrogenase family. Heterotetramer of two alpha and two epsilon subunits. The ACDS complex is made up of alpha, epsilon, beta, gamma and delta subunits with a probable stoichiometry of (alpha(2)epsilon(2))(4)-beta(8)-(gamma(1)delta(1))(8). The cofactor is [4Fe-4S] cluster. It depends on [Ni-4Fe-4S] cluster as a cofactor.

The catalysed reaction is CO + 2 oxidized [2Fe-2S]-[ferredoxin] + H2O = 2 reduced [2Fe-2S]-[ferredoxin] + CO2 + 2 H(+). Its pathway is one-carbon metabolism; methanogenesis from acetate. In terms of biological role, part of the ACDS complex that catalyzes the reversible cleavage of acetyl-CoA, allowing growth on acetate as sole source of carbon and energy. The alpha-epsilon subcomponent functions as a carbon monoxide dehydrogenase. The protein is Acetyl-CoA decarbonylase/synthase complex subunit alpha 2 of Methanosarcina acetivorans (strain ATCC 35395 / DSM 2834 / JCM 12185 / C2A).